The chain runs to 795 residues: Phenylalanine--tRNA ligase beta subunit (795 aa).

In terms of domain architecture, tRNA-binding spans 39–148 (AGEFNGVVVG…ADAPVGKDFR (110 aa)). Positions 401 to 476 (PKLNKVQLRR…RIYGYNSIPN (76 aa)) constitute a B5 domain. Residues Asp454, Asp460, Glu463, and Glu464 each coordinate Mg(2+). In terms of domain architecture, FDX-ACB spans 701–794 (SKFPANKRDL…LKDRFNAYLR (94 aa)).

It belongs to the phenylalanyl-tRNA synthetase beta subunit family. Type 1 subfamily. As to quaternary structure, tetramer of two alpha and two beta subunits. Mg(2+) is required as a cofactor.

It is found in the cytoplasm. It carries out the reaction tRNA(Phe) + L-phenylalanine + ATP = L-phenylalanyl-tRNA(Phe) + AMP + diphosphate + H(+). This chain is Phenylalanine--tRNA ligase beta subunit, found in Mannheimia succiniciproducens (strain KCTC 0769BP / MBEL55E).